The following is a 467-amino-acid chain: ATP synthase subunit beta (467 aa).

150–157 (GGAGVGKT) is an ATP binding site.

The protein belongs to the ATPase alpha/beta chains family. As to quaternary structure, F-type ATPases have 2 components, CF(1) - the catalytic core - and CF(0) - the membrane proton channel. CF(1) has five subunits: alpha(3), beta(3), gamma(1), delta(1), epsilon(1). CF(0) has three main subunits: a(1), b(2) and c(9-12). The alpha and beta chains form an alternating ring which encloses part of the gamma chain. CF(1) is attached to CF(0) by a central stalk formed by the gamma and epsilon chains, while a peripheral stalk is formed by the delta and b chains.

The protein localises to the cell inner membrane. It catalyses the reaction ATP + H2O + 4 H(+)(in) = ADP + phosphate + 5 H(+)(out). Its function is as follows. Produces ATP from ADP in the presence of a proton gradient across the membrane. The catalytic sites are hosted primarily by the beta subunits. The polypeptide is ATP synthase subunit beta (Aliivibrio fischeri (strain MJ11) (Vibrio fischeri)).